The chain runs to 515 residues: Maturase K (515 aa).

Belongs to the intron maturase 2 family. MatK subfamily.

The protein resides in the plastid. The protein localises to the chloroplast. Usually encoded in the trnK tRNA gene intron. Probably assists in splicing its own and other chloroplast group II introns. The chain is Maturase K from Pinus pinea (Italian stone pine).